A 249-amino-acid polypeptide reads, in one-letter code: Pleckstrin homology domain-containing family F member 2 (249 aa).

Residues 35-131 (VLIGEGVLTK…WMNHINKCVS (97 aa)) enclose the PH domain. The FYVE-type zinc-finger motif lies at 152 to 212 (DSEATVCMRC…ICDSCYDLLS (61 aa)). Residues C158, C161, C175, C178, C183, C186, C204, and C207 each coordinate Zn(2+). A compositionally biased stretch (polar residues) spans 219-232 (CQSTRSDSYSQSPK). A disordered region spans residues 219–249 (CQSTRSDSYSQSPKSSLNDASDDDDDEDSSD). Acidic residues predominate over residues 238–249 (ASDDDDDEDSSD).

The protein resides in the early endosome membrane. It localises to the endoplasmic reticulum. In terms of biological role, may play a role in early endosome fusion upstream of RAB5, hence regulating receptor trafficking and fluid-phase transport. Enhances cellular sensitivity to TNF-induced apoptosis. In Gallus gallus (Chicken), this protein is Pleckstrin homology domain-containing family F member 2 (PLEKHF2).